A 363-amino-acid polypeptide reads, in one-letter code: Pyrimidine monooxygenase RutA (363 aa).

FMN is bound by residues 49–50 (IK), Asn-115, Glu-124, 140–141 (RY), and Ser-190.

The protein belongs to the NtaA/SnaA/DszA monooxygenase family. RutA subfamily.

It catalyses the reaction uracil + FMNH2 + NADH + O2 = (Z)-3-ureidoacrylate + FMN + NAD(+) + H2O + H(+). The enzyme catalyses thymine + FMNH2 + NADH + O2 = (Z)-2-methylureidoacrylate + FMN + NAD(+) + H2O + H(+). Functionally, catalyzes the pyrimidine ring opening between N-3 and C-4 by an unusual flavin hydroperoxide-catalyzed mechanism, adding oxygen atoms in the process to yield ureidoacrylate peracid, that immediately reacts with FMN forming ureidoacrylate and FMN-N(5)-oxide. The FMN-N(5)-oxide reacts spontaneously with NADH to produce FMN. Requires the flavin reductase RutF to regenerate FMN in vivo. In Enterobacter sp. (strain 638), this protein is Pyrimidine monooxygenase RutA.